Consider the following 582-residue polypeptide: Proline--tRNA ligase (582 aa).

It belongs to the class-II aminoacyl-tRNA synthetase family. ProS type 1 subfamily. Homodimer.

The protein resides in the cytoplasm. The catalysed reaction is tRNA(Pro) + L-proline + ATP = L-prolyl-tRNA(Pro) + AMP + diphosphate. In terms of biological role, catalyzes the attachment of proline to tRNA(Pro) in a two-step reaction: proline is first activated by ATP to form Pro-AMP and then transferred to the acceptor end of tRNA(Pro). As ProRS can inadvertently accommodate and process non-cognate amino acids such as alanine and cysteine, to avoid such errors it has two additional distinct editing activities against alanine. One activity is designated as 'pretransfer' editing and involves the tRNA(Pro)-independent hydrolysis of activated Ala-AMP. The other activity is designated 'posttransfer' editing and involves deacylation of mischarged Ala-tRNA(Pro). The misacylated Cys-tRNA(Pro) is not edited by ProRS. The protein is Proline--tRNA ligase of Mycobacterium bovis (strain ATCC BAA-935 / AF2122/97).